A 130-amino-acid polypeptide reads, in one-letter code: Small ribosomal subunit protein uS8 (130 aa).

Belongs to the universal ribosomal protein uS8 family. As to quaternary structure, part of the 30S ribosomal subunit. Contacts proteins S5 and S12.

Its function is as follows. One of the primary rRNA binding proteins, it binds directly to 16S rRNA central domain where it helps coordinate assembly of the platform of the 30S subunit. The polypeptide is Small ribosomal subunit protein uS8 (Cereibacter sphaeroides (strain KD131 / KCTC 12085) (Rhodobacter sphaeroides)).